Here is a 1054-residue protein sequence, read N- to C-terminus: Translation initiation factor IF-2 (1054 aa).

4 disordered regions span residues 57 to 213 (DKRK…AASC), 225 to 248 (DPLA…NPGD), 287 to 315 (SGRP…HGLQ), and 401 to 436 (DHAG…KQEL). Polar residues predominate over residues 92–104 (QEPSQAASDVSSP). The segment covering 111 to 213 (EASGAEAAAS…VTSGRRAASC (103 aa)) has biased composition (low complexity). Residues 401–418 (DHAGRGRELVDVSKNKDK) are compositionally biased toward basic and acidic residues. The region spanning 552–721 (TRPPVVTVMG…VLQAEVLELT (170 aa)) is the tr-type G domain. The G1 stretch occupies residues 561 to 568 (GHVDHGKT). Residue 561-568 (GHVDHGKT) coordinates GTP. The interval 586-590 (GITQH) is G2. Residues 607–610 (DTPG) are G3. Residues 607-611 (DTPGH) and 661-664 (NKMD) each bind GTP. Positions 661–664 (NKMD) are G4. Positions 697 to 699 (SAK) are G5.

It belongs to the TRAFAC class translation factor GTPase superfamily. Classic translation factor GTPase family. IF-2 subfamily.

Its subcellular location is the cytoplasm. Its function is as follows. One of the essential components for the initiation of protein synthesis. Protects formylmethionyl-tRNA from spontaneous hydrolysis and promotes its binding to the 30S ribosomal subunits. Also involved in the hydrolysis of GTP during the formation of the 70S ribosomal complex. This chain is Translation initiation factor IF-2 (infB), found in Stigmatella aurantiaca.